The primary structure comprises 461 residues: Argininosuccinate lyase (461 aa).

Belongs to the lyase 1 family. Argininosuccinate lyase subfamily.

The protein localises to the cytoplasm. The catalysed reaction is 2-(N(omega)-L-arginino)succinate = fumarate + L-arginine. Its pathway is amino-acid biosynthesis; L-arginine biosynthesis; L-arginine from L-ornithine and carbamoyl phosphate: step 3/3. This Aeromonas salmonicida (strain A449) protein is Argininosuccinate lyase.